The primary structure comprises 160 residues: Crossover junction endodeoxyribonuclease RuvC (160 aa).

Residues Asp9, Glu68, and Asp141 contribute to the active site. Asp9, Glu68, and Asp141 together coordinate Mg(2+).

Belongs to the RuvC family. As to quaternary structure, homodimer which binds Holliday junction (HJ) DNA. The HJ becomes 2-fold symmetrical on binding to RuvC with unstacked arms; it has a different conformation from HJ DNA in complex with RuvA. In the full resolvosome a probable DNA-RuvA(4)-RuvB(12)-RuvC(2) complex forms which resolves the HJ. The cofactor is Mg(2+).

It localises to the cytoplasm. The enzyme catalyses Endonucleolytic cleavage at a junction such as a reciprocal single-stranded crossover between two homologous DNA duplexes (Holliday junction).. The RuvA-RuvB-RuvC complex processes Holliday junction (HJ) DNA during genetic recombination and DNA repair. Endonuclease that resolves HJ intermediates. Cleaves cruciform DNA by making single-stranded nicks across the HJ at symmetrical positions within the homologous arms, yielding a 5'-phosphate and a 3'-hydroxyl group; requires a central core of homology in the junction. The consensus cleavage sequence is 5'-(A/T)TT(C/G)-3'. Cleavage occurs on the 3'-side of the TT dinucleotide at the point of strand exchange. HJ branch migration catalyzed by RuvA-RuvB allows RuvC to scan DNA until it finds its consensus sequence, where it cleaves and resolves the cruciform DNA. The sequence is that of Crossover junction endodeoxyribonuclease RuvC from Campylobacter jejuni (strain RM1221).